A 117-amino-acid polypeptide reads, in one-letter code: MAKSARSKSIRRNKKVLRENVFQPVIDERTKRLSAHLRDQVNDLTKSSSSKEEGIADNSLKEVSSSEVSDNVGMEVDQPKVSTSGPRDNNRNKWAKKHLKKGKRAKNSNFSKFLKKK.

Positions 39–117 (DQVNDLTKSS…SNFSKFLKKK (79 aa)) are disordered. The segment covering 93 to 106 (KWAKKHLKKGKRAK) has biased composition (basic residues). Positions 107–117 (NSNFSKFLKKK) are enriched in low complexity.

Belongs to the UPF0642 family.

It is found in the nucleus. The protein localises to the nucleolus. This Schizosaccharomyces pombe (strain 972 / ATCC 24843) (Fission yeast) protein is UPF0642 protein C32H8.05.